The sequence spans 307 residues: Fe-S cluster assembly protein dre2 (307 aa).

Disordered stretches follow at residues 1–26 (MTPV…PSTS) and 159–179 (KKKK…VGFV). Positions 15–26 (AAPPTKTAPSTS) are enriched in low complexity. The tract at residues 23–152 (PSTSTRTLLL…EKPAYQEAAV (130 aa)) is N-terminal SAM-like domain. A linker region spans residues 153 to 197 (PLRLGGKKKKAPAPTEQPPVATGVGFVDGNDELIDEDDLLSDDDL). [2Fe-2S] cluster contacts are provided by Cys-207, Cys-219, Cys-222, and Cys-224. The tract at residues 207-224 (CQPEKAKKRRRPCKDCTC) is fe-S binding site A. [4Fe-4S] cluster contacts are provided by Cys-270, Cys-273, Cys-281, and Cys-284. Short sequence motifs (cx2C motif) lie at residues 270–273 (CNSC) and 281–284 (CSSC). The interval 270-284 (CNSCSLGDAFRCSSC) is fe-S binding site B.

It belongs to the anamorsin family. Monomer. Interacts with tah18. Interacts with mia40. It depends on [2Fe-2S] cluster as a cofactor. [4Fe-4S] cluster is required as a cofactor.

The protein localises to the cytoplasm. It localises to the mitochondrion intermembrane space. Functionally, component of the cytosolic iron-sulfur (Fe-S) protein assembly (CIA) machinery required for the maturation of extramitochondrial Fe-S proteins. Part of an electron transfer chain functioning in an early step of cytosolic Fe-S biogenesis, facilitating the de novo assembly of a [4Fe-4S] cluster on the scaffold complex cfd1-nbp35. Electrons are transferred to dre2 from NADPH via the FAD- and FMN-containing protein tah18. Tah18-dre2 are also required for the assembly of the diferric tyrosyl radical cofactor of ribonucleotide reductase (RNR), probably by providing electrons for reduction during radical cofactor maturation in the catalytic small subunit rnr2. This chain is Fe-S cluster assembly protein dre2, found in Aspergillus terreus (strain NIH 2624 / FGSC A1156).